The sequence spans 122 residues: MSITKDQILEALAAMSVMEVVELIEAMEEKFGVSAAAAVVSGGADAGAAAEEKTEFDVVMTSHGDNKVAVIKALRGATGLGLKEAKGMAESAPVAVKEGISKEEAEALKKELEEAGAQVEIK.

The protein belongs to the bacterial ribosomal protein bL12 family. In terms of assembly, homodimer. Part of the ribosomal stalk of the 50S ribosomal subunit. Forms a multimeric L10(L12)X complex, where L10 forms an elongated spine to which 2 to 4 L12 dimers bind in a sequential fashion. Binds GTP-bound translation factors.

Functionally, forms part of the ribosomal stalk which helps the ribosome interact with GTP-bound translation factors. Is thus essential for accurate translation. The chain is Large ribosomal subunit protein bL12 from Shewanella loihica (strain ATCC BAA-1088 / PV-4).